We begin with the raw amino-acid sequence, 209 residues long: uncharacterized protein (209 aa).

The 167-residue stretch at Met1–Gly167 folds into the Nudix hydrolase domain.

This is an uncharacterized protein from Orgyia pseudotsugata (Douglas-fir tussock moth).